Here is a 240-residue protein sequence, read N- to C-terminus: Protein GUCD1 (240 aa).

The chain is Protein GUCD1 (GUCD1) from Homo sapiens (Human).